The primary structure comprises 156 residues: MPRRRVVGQRKILPDPKFHSELLAKFINVIMQDGKKSTAEKIIYKALDVVAEKKSESHLTILEAALDNVRPSVEVKSRRVGGSTYQVPCEVRPVRRNALAMRWLVEAARKRGEKSMALRLAGEMLDASENKGTAVKKREDVHRMAEANKAFAHYRW.

Belongs to the universal ribosomal protein uS7 family. As to quaternary structure, part of the 30S ribosomal subunit. Contacts proteins S9 and S11.

One of the primary rRNA binding proteins, it binds directly to 16S rRNA where it nucleates assembly of the head domain of the 30S subunit. Is located at the subunit interface close to the decoding center, probably blocks exit of the E-site tRNA. In Shewanella baltica (strain OS223), this protein is Small ribosomal subunit protein uS7.